Reading from the N-terminus, the 441-residue chain is Methylenetetrahydrofolate--tRNA-(uracil-5-)-methyltransferase TrmFO (441 aa).

11–16 contributes to the FAD binding site; that stretch reads GAGLAG.

Belongs to the MnmG family. TrmFO subfamily. FAD is required as a cofactor.

Its subcellular location is the cytoplasm. The catalysed reaction is uridine(54) in tRNA + (6R)-5,10-methylene-5,6,7,8-tetrahydrofolate + NADH + H(+) = 5-methyluridine(54) in tRNA + (6S)-5,6,7,8-tetrahydrofolate + NAD(+). The enzyme catalyses uridine(54) in tRNA + (6R)-5,10-methylene-5,6,7,8-tetrahydrofolate + NADPH + H(+) = 5-methyluridine(54) in tRNA + (6S)-5,6,7,8-tetrahydrofolate + NADP(+). Functionally, catalyzes the folate-dependent formation of 5-methyl-uridine at position 54 (M-5-U54) in all tRNAs. The chain is Methylenetetrahydrofolate--tRNA-(uracil-5-)-methyltransferase TrmFO from Lactiplantibacillus plantarum (strain ATCC BAA-793 / NCIMB 8826 / WCFS1) (Lactobacillus plantarum).